The chain runs to 247 residues: Cell division protein ZapD (247 aa).

It belongs to the ZapD family. As to quaternary structure, interacts with FtsZ.

It localises to the cytoplasm. In terms of biological role, cell division factor that enhances FtsZ-ring assembly. Directly interacts with FtsZ and promotes bundling of FtsZ protofilaments, with a reduction in FtsZ GTPase activity. This chain is Cell division protein ZapD, found in Shigella boydii serotype 18 (strain CDC 3083-94 / BS512).